Reading from the N-terminus, the 273-residue chain is Peptidyl-prolyl cis-trans isomerase E (273 aa).

In terms of domain architecture, RRM spans 1-48; it reads MPMDYQTEKHRGFAFVEFEEVEDAMSAIDNMNESEIFGRTIRVNVARP. The segment at 77–103 is disordered; it reads RKLDEPDIVNPSDTSENVEDLSDEEMR. Residues 115 to 271 enclose the PPIase cyclophilin-type domain; sequence FFDIRIGNGD…EPVIISRCGE (157 aa).

It belongs to the cyclophilin-type PPIase family. PPIase E subfamily.

It localises to the cytoplasm. The catalysed reaction is [protein]-peptidylproline (omega=180) = [protein]-peptidylproline (omega=0). Its activity is regulated as follows. Binds cyclosporin A (CsA). CsA mediates some of its effects via an inhibitory action on PPIase. Its function is as follows. PPIases accelerate the folding of proteins. It catalyzes the cis-trans isomerization of proline imidic peptide bonds in oligopeptides. This is Peptidyl-prolyl cis-trans isomerase E from Schistosoma mansoni (Blood fluke).